Consider the following 97-residue polypeptide: Signal recognition particle 19 kDa protein (97 aa).

This sequence belongs to the SRP19 family. In terms of assembly, part of the signal recognition particle protein translocation system, which is composed of SRP and FtsY. Archaeal SRP consists of a 7S RNA molecule of 300 nucleotides and two protein subunits: SRP54 and SRP19.

It is found in the cytoplasm. In terms of biological role, involved in targeting and insertion of nascent membrane proteins into the cytoplasmic membrane. Binds directly to 7S RNA and mediates binding of the 54 kDa subunit of the SRP. The protein is Signal recognition particle 19 kDa protein of Pyrobaculum calidifontis (strain DSM 21063 / JCM 11548 / VA1).